Consider the following 579-residue polypeptide: Folliculin (579 aa).

Positions 30 to 81 (PQGDGNEDSPGQGEQAEEEEGGIQMNSRMRAHSPAEGASVESSSPGPKKSDM) are disordered. 2 positions are modified to phosphoserine: S62 and S73. In terms of domain architecture, uDENN FLCN/SMCR8-type spans 86–242 (RSLAAGHPGY…RNGNAARSLT (157 aa)). Residues 210-220 (AEQFGCPQRAQ) form an essential for interaction with LDHA region. Positions 287 to 310 (EKLADLEEESESWDNSEAEEEEKA) form a coiled coil. Residues 294 to 308 (EESESWDNSEAEEEE) show a composition bias toward acidic residues. Residues 294–337 (EESESWDNSEAEEEEKAPVLPESTEGRELTQGPAESSSLSGCGS) form a disordered region. S302 is subject to Phosphoserine. Positions 326–336 (PAESSSLSGCG) are enriched in polar residues. A cDENN FLCN/SMCR8-type domain is found at 339–491 (QPRKLPVFKS…ILNKIEAALT (153 aa)). A phosphoserine; by ULK1 mark is found at S406, S537, and S542. The dDENN FLCN/SMCR8-type domain maps to 493-558 (QNLSVDVVDQ…LLKFWMTGLS (66 aa)). S571 is subject to Phosphoserine.

Belongs to the folliculin family. As to quaternary structure, interacts (via C-terminus) with FNIP1 or FNIP2 (via C-terminus). Component of the lysosomal folliculin complex (LFC), composed of FLCN, FNIP1 (or FNIP2), RagA/RRAGA or RagB/RRAGB GDP-bound, RagC/RRAGC or RagD/RRAGD GTP-bound, and Ragulator. Interaction with FNIP1 or FNIP2 mediates indirect interaction with the PRKAA1, PRKAB1 and PRKAG1 subunits of 5'-AMP-activated protein kinase (AMPK). Interacts with HSP90AA1 in the presence of FNIP1. Interacts with HSP70, STUB1, CDC37, AHSA1, CCT2, STIP1, PTGES3 and PPP5C. Interacts with GABARAP; interaction takes place in the presence of FNIP1 and/or FNIP2. Interacts with RILP; the interaction is direct and promotes association between RILP and RAB34. Interacts with KIF3A and KIF3B. Interacts with lactate dehydrogenase LDHA, but not LDHB; the interaction is direct, may preferentially bind LDHA dimers rather than tetramers, and regulates LDHA activity, acting as an uncompetitive inhibitor. Post-translationally, phosphorylation by ULK1 modulates the interaction with GABARAP and is required to regulate autophagy. In terms of tissue distribution, expressed in most tissues tested, including skin, lung, kidney, heart, testis and stomach.

The protein localises to the lysosome membrane. It localises to the cytoplasm. The protein resides in the cytosol. Its subcellular location is the cell projection. It is found in the cilium. The protein localises to the cytoskeleton. It localises to the microtubule organizing center. The protein resides in the centrosome. Its subcellular location is the spindle. It is found in the nucleus. GTPase-activating activity is inhibited in the folliculin complex (LFC), which stabilizes the GDP-bound state of RagA/RRAGA (or RagB/RRAGB), because Arg-164 is located far from the RagC/RRAGC or RagD/RRAGD nucleotide pocket. Disassembly of the LFC complex upon amino acid restimulation liberates the GTPase-activating activity. In terms of biological role, multi-functional protein, involved in both the cellular response to amino acid availability and in the regulation of glycolysis. GTPase-activating protein that plays a key role in the cellular response to amino acid availability through regulation of the non-canonical mTORC1 signaling cascade controlling the MiT/TFE factors TFEB and TFE3. Activates mTORC1 by acting as a GTPase-activating protein: specifically stimulates GTP hydrolysis by RagC/RRAGC or RagD/RRAGD, promoting the conversion to the GDP-bound state of RagC/RRAGC or RagD/RRAGD, and thereby activating the kinase activity of mTORC1. The GTPase-activating activity is inhibited during starvation and activated in presence of nutrients. Acts as a key component for non-canonical mTORC1-dependent control of the MiT/TFE factors TFEB and TFE3, while it is not involved in mTORC1-dependent phosphorylation of canonical RPS6KB1/S6K1 and EIF4EBP1/4E-BP1. In low-amino acid conditions, the lysosomal folliculin complex (LFC) is formed on the membrane of lysosomes, which inhibits the GTPase-activating activity of FLCN, inactivates mTORC1 and maximizes nuclear translocation of TFEB and TFE3. Upon amino acid restimulation, RagA/RRAGA (or RagB/RRAGB) nucleotide exchange promotes disassembly of the LFC complex and liberates the GTPase-activating activity of FLCN, leading to activation of mTORC1 and subsequent cytoplasmic retention of TFEB and TFE3. Indirectly acts as a positive regulator of Wnt signaling by promoting mTOR-dependent cytoplasmic retention of MiT/TFE factor TFE3. Required for the exit of hematopoietic stem cell from pluripotency by promoting mTOR-dependent cytoplasmic retention of TFE3, thereby increasing Wnt signaling. Acts as an inhibitor of browning of adipose tissue by regulating mTOR-dependent cytoplasmic retention of TFE3. Involved in the control of embryonic stem cells differentiation; together with LAMTOR1 it is necessary to recruit and activate RagC/RRAGC and RagD/RRAGD at the lysosomes, and to induce exit of embryonic stem cells from pluripotency via non-canonical, mTOR-independent TFE3 inactivation. In response to flow stress, regulates STK11/LKB1 accumulation and mTORC1 activation through primary cilia: may act by recruiting STK11/LKB1 to primary cilia for activation of AMPK resided at basal bodies, causing mTORC1 down-regulation. Together with FNIP1 and/or FNIP2, regulates autophagy: following phosphorylation by ULK1, interacts with GABARAP and promotes autophagy. Required for starvation-induced perinuclear clustering of lysosomes by promoting association of RILP with its effector RAB34. Regulates glycolysis by binding to lactate dehydrogenase LDHA, acting as an uncompetitive inhibitor. This Homo sapiens (Human) protein is Folliculin.